Here is a 123-residue protein sequence, read N- to C-terminus: Large ribosomal subunit protein bL12 (123 aa).

The protein belongs to the bacterial ribosomal protein bL12 family. Homodimer. Part of the ribosomal stalk of the 50S ribosomal subunit. Forms a multimeric L10(L12)X complex, where L10 forms an elongated spine to which 2 to 4 L12 dimers bind in a sequential fashion. Binds GTP-bound translation factors.

In terms of biological role, forms part of the ribosomal stalk which helps the ribosome interact with GTP-bound translation factors. Is thus essential for accurate translation. The sequence is that of Large ribosomal subunit protein bL12 from Dehalococcoides mccartyi (strain ATCC BAA-2100 / JCM 16839 / KCTC 5957 / BAV1).